Consider the following 410-residue polypeptide: MTKKPWERRLKDLSHLLKCCIDTYFDPELFRLNLNQFLQTARTVTFIIQKNKNQIIGYDIWYNNNVIEKWKNDPLMAWAKNSRNTIEKQGDLEMYSEAKATLISSYIEENDIEFITNESMLNIGIKKLVRLAQKKLPSYLTESSIIKSERRWVANTLKDYELLHALAIIYGRMYNCCNSLGIQINNPMGDDVISPTSFDSLFDEARRITYLKLKDYSISKLSFSMIQYDNKIIPEDIKERLKLVDKPKNITSTEELVDYTAKLAETTFLKDGYHIQTLIFYDKQFHPIDLINTTFEDQADKYIFWRYAADRAKITNAYGFIWISELWLRKASIYSNKPIHTMPIIDERLQVIGIDSNNNQKCISWKIVRENEEKKPTLEISTADSKHDEKPYFMRSVLKAIGGDVNTMNN.

This chain is Protein ea47 (ea47), found in Escherichia coli (Bacteriophage lambda).